Here is a 146-residue protein sequence, read N- to C-terminus: Large ribosomal subunit protein uL15 (146 aa).

Basic and acidic residues predominate over residues M1–R18. The disordered stretch occupies residues M1–F58. Residues S42–G52 are compositionally biased toward gly residues.

It belongs to the universal ribosomal protein uL15 family. Part of the 50S ribosomal subunit.

Its function is as follows. Binds to the 23S rRNA. The sequence is that of Large ribosomal subunit protein uL15 from Oceanobacillus iheyensis (strain DSM 14371 / CIP 107618 / JCM 11309 / KCTC 3954 / HTE831).